Reading from the N-terminus, the 420-residue chain is Gamma-glutamyl phosphate reductase (420 aa).

The protein belongs to the gamma-glutamyl phosphate reductase family.

It localises to the cytoplasm. It carries out the reaction L-glutamate 5-semialdehyde + phosphate + NADP(+) = L-glutamyl 5-phosphate + NADPH + H(+). It participates in amino-acid biosynthesis; L-proline biosynthesis; L-glutamate 5-semialdehyde from L-glutamate: step 2/2. Functionally, catalyzes the NADPH-dependent reduction of L-glutamate 5-phosphate into L-glutamate 5-semialdehyde and phosphate. The product spontaneously undergoes cyclization to form 1-pyrroline-5-carboxylate. The chain is Gamma-glutamyl phosphate reductase from Streptococcus gordonii (strain Challis / ATCC 35105 / BCRC 15272 / CH1 / DL1 / V288).